A 402-amino-acid polypeptide reads, in one-letter code: Glutamate N-acetyltransferase (402 aa).

Substrate is bound by residues threonine 146, lysine 172, threonine 185, glutamate 267, asparagine 397, and threonine 402. The Nucleophile role is filled by threonine 185.

This sequence belongs to the ArgJ family. Heterotetramer of two alpha and two beta chains.

Its subcellular location is the cytoplasm. It catalyses the reaction N(2)-acetyl-L-ornithine + L-glutamate = N-acetyl-L-glutamate + L-ornithine. It functions in the pathway amino-acid biosynthesis; L-arginine biosynthesis; L-ornithine and N-acetyl-L-glutamate from L-glutamate and N(2)-acetyl-L-ornithine (cyclic): step 1/1. Competitively inhibited by L-ornithine. Catalyzes the transfer of the acetyl group from N(2)-acetylornithine to glutamate, forming N-acetylglutamate and L-ornithine. This Methanocaldococcus jannaschii (strain ATCC 43067 / DSM 2661 / JAL-1 / JCM 10045 / NBRC 100440) (Methanococcus jannaschii) protein is Glutamate N-acetyltransferase.